Consider the following 381-residue polypeptide: Dual-specificity RNA methyltransferase RlmN (381 aa).

The active-site Proton acceptor is the E95. The 239-residue stretch at 101–339 (DGRRGTLCVS…MTTVRTTRGD (239 aa)) folds into the Radical SAM core domain. C108 and C345 form a disulfide bridge. [4Fe-4S] cluster-binding residues include C115, C119, and C122. S-adenosyl-L-methionine is bound by residues 169–170 (GE), S201, 223–225 (SLH), and N302. C345 (S-methylcysteine intermediate) is an active-site residue.

It belongs to the radical SAM superfamily. RlmN family. [4Fe-4S] cluster serves as cofactor.

It is found in the cytoplasm. The enzyme catalyses adenosine(2503) in 23S rRNA + 2 reduced [2Fe-2S]-[ferredoxin] + 2 S-adenosyl-L-methionine = 2-methyladenosine(2503) in 23S rRNA + 5'-deoxyadenosine + L-methionine + 2 oxidized [2Fe-2S]-[ferredoxin] + S-adenosyl-L-homocysteine. It carries out the reaction adenosine(37) in tRNA + 2 reduced [2Fe-2S]-[ferredoxin] + 2 S-adenosyl-L-methionine = 2-methyladenosine(37) in tRNA + 5'-deoxyadenosine + L-methionine + 2 oxidized [2Fe-2S]-[ferredoxin] + S-adenosyl-L-homocysteine. Functionally, specifically methylates position 2 of adenine 2503 in 23S rRNA and position 2 of adenine 37 in tRNAs. m2A2503 modification seems to play a crucial role in the proofreading step occurring at the peptidyl transferase center and thus would serve to optimize ribosomal fidelity. This Alcanivorax borkumensis (strain ATCC 700651 / DSM 11573 / NCIMB 13689 / SK2) protein is Dual-specificity RNA methyltransferase RlmN.